The primary structure comprises 418 residues: AA11 family lytic polysaccharide monooxygenase B (418 aa).

Residues 1–21 form the signal peptide; that stretch reads MMFSKSGLVAVAMLGASAVEA. Cu(+) contacts are provided by H22 and H82. Disulfide bonds link C50–C165, C87–C113, and C206–C240. 2 N-linked (GlcNAc...) asparagine glycosylation sites follow: N120 and N134. Residues 226 to 345 form a disordered region; that stretch reads DGNPSNLQPA…SSSSSNGALT (120 aa). A compositionally biased stretch (low complexity) spans 254 to 345; it reads SPSTPSTSSS…SSSSSNGALT (92 aa).

Belongs to the polysaccharide monooxygenase AA11 family. It depends on Cu(2+) as a cofactor.

Its subcellular location is the secreted. Its function is as follows. Lytic polysaccharide monooxygenase (LPMO)-like protein that acts as a strict peroxygenase and does not catalyze a monooxygenase reaction. It is indeed hardly active on chitin, while being very active on soluble oligomers of N-acetylglucosamine. Cleaves the glycosidic bonds byoxidizing the C1 position. Also unable to oxidize cellopentaose. Probably breaks glycosidic bonds in non-polymeric substrates possibly carbohydrates in the cell wall of the fungus or its competitors. In the presence of chitotetraose, the enzyme can withstand considerable amounts of H(2)O(2), which it uses to efficiently and stoichiometrically convert this substrate. In Aspergillus fumigatus (strain ATCC MYA-4609 / CBS 101355 / FGSC A1100 / Af293) (Neosartorya fumigata), this protein is AA11 family lytic polysaccharide monooxygenase B.